The primary structure comprises 200 residues: Peptidyl-tRNA hydrolase (200 aa).

Tyr15 lines the tRNA pocket. The active-site Proton acceptor is the His20. The tRNA site is built by Tyr66, Asn68, and Asn114.

Belongs to the PTH family. As to quaternary structure, monomer.

The protein localises to the cytoplasm. The catalysed reaction is an N-acyl-L-alpha-aminoacyl-tRNA + H2O = an N-acyl-L-amino acid + a tRNA + H(+). Functionally, hydrolyzes ribosome-free peptidyl-tRNAs (with 1 or more amino acids incorporated), which drop off the ribosome during protein synthesis, or as a result of ribosome stalling. Its function is as follows. Catalyzes the release of premature peptidyl moieties from peptidyl-tRNA molecules trapped in stalled 50S ribosomal subunits, and thus maintains levels of free tRNAs and 50S ribosomes. The sequence is that of Peptidyl-tRNA hydrolase from Paraburkholderia phymatum (strain DSM 17167 / CIP 108236 / LMG 21445 / STM815) (Burkholderia phymatum).